A 150-amino-acid polypeptide reads, in one-letter code: UPF0178 protein PC1_0756 (150 aa).

Belongs to the UPF0178 family.

The sequence is that of UPF0178 protein PC1_0756 from Pectobacterium carotovorum subsp. carotovorum (strain PC1).